A 203-amino-acid polypeptide reads, in one-letter code: Putative 3-methyladenine DNA glycosylase (203 aa).

It belongs to the DNA glycosylase MPG family.

This is Putative 3-methyladenine DNA glycosylase from Clostridium tetani (strain Massachusetts / E88).